We begin with the raw amino-acid sequence, 514 residues long: ATP synthase subunit alpha (514 aa).

170–177 is a binding site for ATP; the sequence is GDRQIGKT.

This sequence belongs to the ATPase alpha/beta chains family. In terms of assembly, F-type ATPases have 2 components, CF(1) - the catalytic core - and CF(0) - the membrane proton channel. CF(1) has five subunits: alpha(3), beta(3), gamma(1), delta(1), epsilon(1). CF(0) has three main subunits: a(1), b(2) and c(9-12). The alpha and beta chains form an alternating ring which encloses part of the gamma chain. CF(1) is attached to CF(0) by a central stalk formed by the gamma and epsilon chains, while a peripheral stalk is formed by the delta and b chains.

It is found in the cell inner membrane. It carries out the reaction ATP + H2O + 4 H(+)(in) = ADP + phosphate + 5 H(+)(out). Produces ATP from ADP in the presence of a proton gradient across the membrane. The alpha chain is a regulatory subunit. The chain is ATP synthase subunit alpha from Pseudomonas syringae pv. tomato (strain ATCC BAA-871 / DC3000).